A 380-amino-acid polypeptide reads, in one-letter code: Chorismate synthase (380 aa).

Position 47 (Arg47) interacts with NADP(+). FMN-binding positions include 124–126, Gly288, 303–307, and Arg329; these read RSS and KPTST.

It belongs to the chorismate synthase family. As to quaternary structure, homotetramer. Requires FMNH2 as cofactor.

It carries out the reaction 5-O-(1-carboxyvinyl)-3-phosphoshikimate = chorismate + phosphate. It participates in metabolic intermediate biosynthesis; chorismate biosynthesis; chorismate from D-erythrose 4-phosphate and phosphoenolpyruvate: step 7/7. In terms of biological role, catalyzes the anti-1,4-elimination of the C-3 phosphate and the C-6 proR hydrogen from 5-enolpyruvylshikimate-3-phosphate (EPSP) to yield chorismate, which is the branch point compound that serves as the starting substrate for the three terminal pathways of aromatic amino acid biosynthesis. This reaction introduces a second double bond into the aromatic ring system. This is Chorismate synthase from Leptospira interrogans serogroup Icterohaemorrhagiae serovar copenhageni (strain Fiocruz L1-130).